The chain runs to 240 residues: Large ribosomal subunit protein uL1c (240 aa).

This sequence belongs to the universal ribosomal protein uL1 family. In terms of assembly, part of the 50S ribosomal subunit.

It localises to the plastid. The protein localises to the chloroplast. In terms of biological role, binds directly to 23S rRNA. Might be involved in E site tRNA release (Potential). This is Large ribosomal subunit protein uL1c (rpl1) from Cyanidium caldarium (Red alga).